The primary structure comprises 716 residues: MPQLSKSLSFDGRDIRLELGLFAPQAGGSVLISSGDTAVLVAATRSTAREGIDFLPLTVDYEERMYAAGRIPGGFLRREGRPPERATLTSRLIDRPLRPLFPSWLRDDLQVVATTLSMDETVPPDVLAVTGASIATLVAKIPFYGPMAAVRVGLVGDDFIINPTYREIEKGDLDLVVAGTPAGVIMVEAGANQLPEADVIEAIDFGYEAVQELIKAQQSLLAELGIEQILPEAPNADNTLENFVRDRASSGVQQVLQHFSFTKSERDAALDEVKASVVEAIAALPEEDPVRSVTAAEPKALGNTFKALTKTLMRQQILRDGVRVDGRKLDQVRPISSQVGLLPPRVHGSGLFQRGLTQVLSIATLGTPGDAQELDDLHPDTQKRYLHHYNMPPYSVGETRPMRSPGRREIGHGALAERALLPVLPSKEEFPYVIRVVSEVLSSNGSTSMGSVCGSTLALMDAGVPIKKPVSGAAMGLIREGDEYRVLTDIQGIEDFLGDMDFKVAGTDQGITALQMDMKIHGLPLEIIADAINQAKPARLHILNKMLEAIATPRADLSTYAPRLFRIQINPEQIGLVIGPGGKTIRSITEQTGAKIDIEDTGAVTISAVDADSALRAKSIIEGMTRTITAGDVYIGKVTRIIPIGAFVEFLPGKEGMIHISQIADYRVARVEDELTVGDEVVVKVREIDQKGRVNLTRKGIDPEEVSAARAAVEAS.

The Mg(2+) site is built by D495 and D501. One can recognise a KH domain in the interval 562–621 (PRLFRIQINPEQIGLVIGPGGKTIRSITEQTGAKIDIEDTGAVTISAVDADSALRAKSII). The S1 motif domain occupies 631–699 (GDVYIGKVTR…QKGRVNLTRK (69 aa)).

It belongs to the polyribonucleotide nucleotidyltransferase family. Mg(2+) serves as cofactor.

Its subcellular location is the cytoplasm. The catalysed reaction is RNA(n+1) + phosphate = RNA(n) + a ribonucleoside 5'-diphosphate. Involved in mRNA degradation. Catalyzes the phosphorolysis of single-stranded polyribonucleotides processively in the 3'- to 5'-direction. This Synechococcus elongatus (strain ATCC 33912 / PCC 7942 / FACHB-805) (Anacystis nidulans R2) protein is Polyribonucleotide nucleotidyltransferase.